The primary structure comprises 319 residues: G-protein coupled receptor 171 (319 aa).

The Extracellular portion of the chain corresponds to 1-21 (MTNSSTFCPVYRDLEPFTYFF). N-linked (GlcNAc...) asparagine glycosylation is present at Asn-3. A helical membrane pass occupies residues 22-42 (YLVFLIGIIGSCFATWAFIQK). Residues 43-48 (TTNHRC) are Cytoplasmic-facing. Residues 49–69 (VSIYLINLLTADFLLTLALPV) form a helical membrane-spanning segment. The Extracellular segment spans residues 70-89 (KIIVDLGVAPWKLRIFHCQV). A helical membrane pass occupies residues 90–110 (TACLIYINMYLSIIFLAFVSI). Over 111 to 132 (DRCLQLIHSCKIYRIQEPGFAK) the chain is Cytoplasmic. The helical transmembrane segment at 133 to 153 (MISAVVWLMVLLIMVPNMVIP) threads the bilayer. At 154–181 (IKDIKEKSNVGCMEFKKEFGRNWHLLTN) the chain is on the extracellular side. The chain crosses the membrane as a helical span at residues 182–202 (FICVAIFLNFSVIILISNFLA). The Cytoplasmic portion of the chain corresponds to 203–224 (IRQLYRNRDNTNYPSVKSALLH). A helical membrane pass occupies residues 225–245 (ILLVTASYIICFVPYHAVRIP). Residues 246-268 (YTLSQTEVISDCSTRIALFKAKE) are Extracellular-facing. A helical transmembrane segment spans residues 269–289 (ATLLLAVSNLCFDPILYYHLS). Topologically, residues 290-319 (KAFRLKVTETFASPKKSKPLEERLRSENDV) are cytoplasmic.

It belongs to the G-protein coupled receptor 1 family. As to expression, highly expressed in hypothalamus, including the arcuate nucleus, paraventricular nucleus and dorsomedial hypothalamus. Expressed in periaqueductal gray (at protein level), found primarily in GABAergic neurons and to a lesser extent in glutamatergic neurons. Expressed in T cells and natural killer cells.

Its subcellular location is the cell membrane. In terms of biological role, G-protein coupled receptor for Big LEN, a 16-amino acid neuropeptide produced from the precursor protein, proSAAS (encoded by PCSK1N). Acts through a G(i)-alpha-mediated pathway in response to Big LEN. Big LEN-GPR171 system plays an important role in regulating feeding and metabolism. Also plays a role in modulating fear and anxiety-like behaviors in the basolateral amygdala. Big LEN-GPR171 modulates the mu-type opioid receptor signaling and antinociception. Acts as a negative regulator T cell function. This chain is G-protein coupled receptor 171 (Gpr171), found in Mus musculus (Mouse).